Reading from the N-terminus, the 600-residue chain is Elongation factor 4 (600 aa).

The 183-residue stretch at 4–186 (KNVRNFCIIA…AIVNRIPPPK (183 aa)) folds into the tr-type G domain. Residues 16–21 (DHGKST) and 133–136 (NKID) contribute to the GTP site.

This sequence belongs to the TRAFAC class translation factor GTPase superfamily. Classic translation factor GTPase family. LepA subfamily.

The protein resides in the cell inner membrane. The enzyme catalyses GTP + H2O = GDP + phosphate + H(+). Its function is as follows. Required for accurate and efficient protein synthesis under certain stress conditions. May act as a fidelity factor of the translation reaction, by catalyzing a one-codon backward translocation of tRNAs on improperly translocated ribosomes. Back-translocation proceeds from a post-translocation (POST) complex to a pre-translocation (PRE) complex, thus giving elongation factor G a second chance to translocate the tRNAs correctly. Binds to ribosomes in a GTP-dependent manner. In Aquifex aeolicus (strain VF5), this protein is Elongation factor 4.